We begin with the raw amino-acid sequence, 718 residues long: Heme peroxidase 2 (718 aa).

Residues 1-19 form the signal peptide; that stretch reads MNLKPTILLFTILFLKCAT. Positions 20 to 146 are excised as a propeptide; that stretch reads FEVNEETERI…QANRRCSSPP (127 aa). Disordered stretches follow at residues 41-64 and 108-144; these read RASE…ANSD and LLQS…RCSS. The span at 45–64 shows a compositional bias: polar residues; that stretch reads NSESEQTSQHIIVSQQANSD. Residues 109–118 are compositionally biased toward low complexity; the sequence is LQSSETTTTT. A compositionally biased stretch (basic residues) spans 126–139; sequence SKRSAIFRSKRQAN. Residues Cys149 and Cys164 are joined by a disulfide bond. Catalysis depends on His241, which acts as the Proton acceptor. Asp242 contacts Ca(2+). Cys262 and Cys272 are disulfide-bonded. Ca(2+) contacts are provided by Ser311, Phe313, Asp315, and Ser317. Asn354 carries an N-linked (GlcNAc...) asparagine glycan. Cysteines 358 and 366 form a disulfide. His477 is a binding site for heme b. 4 N-linked (GlcNAc...) asparagine glycosylation sites follow: Asn551, Asn592, Asn662, and Asn673. Cys682 and Cys705 are joined by a disulfide.

Belongs to the peroxidase family. Requires heme b as cofactor. Expressed in the hypodermis and gland cells of the pharynx. Specifically, there is low and transient expression from the distal bulb of the pharynx to the anterior of the buccal cavity. Whole body expression levels increase upon entry into the dauer phase.

The protein resides in the secreted. It carries out the reaction 2 a phenolic donor + H2O2 = 2 a phenolic radical donor + 2 H2O. Functionally, peroxidase which is involved in maintaining the cuticle integrity in the hypodermis and pharynx. It thus plays a role in conferring resistance against Gram-positive bacteria such as E.faecalis, S.aureus and C.diphtheriae, and yeast such as C.albicans. This Caenorhabditis elegans protein is Heme peroxidase 2.